The following is a 760-amino-acid chain: Xaa-Pro dipeptidyl-peptidase (760 aa).

Residues S349, D469, and H499 each act as charge relay system in the active site.

The protein belongs to the peptidase S15 family. In terms of assembly, homodimer.

It is found in the cytoplasm. The enzyme catalyses Hydrolyzes Xaa-Pro-|- bonds to release unblocked, N-terminal dipeptides from substrates including Ala-Pro-|-p-nitroanilide and (sequentially) Tyr-Pro-|-Phe-Pro-|-Gly-Pro-|-Ile.. In terms of biological role, removes N-terminal dipeptides sequentially from polypeptides having unsubstituted N-termini provided that the penultimate residue is proline. The polypeptide is Xaa-Pro dipeptidyl-peptidase (Streptococcus pyogenes serotype M49 (strain NZ131)).